Reading from the N-terminus, the 102-residue chain is Small ribosomal subunit protein uS10 (102 aa).

The protein belongs to the universal ribosomal protein uS10 family. In terms of assembly, part of the 30S ribosomal subunit.

Its function is as follows. Involved in the binding of tRNA to the ribosomes. The chain is Small ribosomal subunit protein uS10 from Bacillus cereus (strain G9842).